Reading from the N-terminus, the 383-residue chain is Acetylornithine deacetylase (383 aa).

His80 contributes to the Zn(2+) binding site. Asp82 is a catalytic residue. Asp112 contributes to the Zn(2+) binding site. Residue Glu144 is part of the active site. Residues Glu145, Glu169, and His355 each contribute to the Zn(2+) site.

The protein belongs to the peptidase M20A family. ArgE subfamily. As to quaternary structure, homodimer. It depends on Zn(2+) as a cofactor. The cofactor is Co(2+). Requires glutathione as cofactor.

Its subcellular location is the cytoplasm. The enzyme catalyses N(2)-acetyl-L-ornithine + H2O = L-ornithine + acetate. The protein operates within amino-acid biosynthesis; L-arginine biosynthesis; L-ornithine from N(2)-acetyl-L-ornithine (linear): step 1/1. Functionally, catalyzes the hydrolysis of the amide bond of N(2)-acetylated L-amino acids. Cleaves the acetyl group from N-acetyl-L-ornithine to form L-ornithine, an intermediate in L-arginine biosynthesis pathway, and a branchpoint in the synthesis of polyamines. The chain is Acetylornithine deacetylase from Escherichia coli O45:K1 (strain S88 / ExPEC).